The following is a 277-amino-acid chain: F420-dependent methylenetetrahydromethanopterin dehydrogenase (277 aa).

The disordered stretch occupies residues 249–277 (EKATDSVSRKPHGADGKRLNKTKLMEKPE).

Belongs to the MTD family.

It catalyses the reaction 5,10-methylenetetrahydromethanopterin + oxidized coenzyme F420-(gamma-L-Glu)(n) + 2 H(+) = 5,10-methenyl-5,6,7,8-tetrahydromethanopterin + reduced coenzyme F420-(gamma-L-Glu)(n). It functions in the pathway one-carbon metabolism; methanogenesis from CO(2); 5,10-methylene-5,6,7,8-tetrahydromethanopterin from 5,10-methenyl-5,6,7,8-tetrahydromethanopterin (coenzyme F420 route): step 1/1. Functionally, catalyzes the reversible reduction of methenyl-H(4)MPT(+) to methylene-H(4)MPT. This chain is F420-dependent methylenetetrahydromethanopterin dehydrogenase, found in Methanococcus aeolicus (strain ATCC BAA-1280 / DSM 17508 / OCM 812 / Nankai-3).